A 276-amino-acid chain; its full sequence is Undecaprenyl-diphosphatase 1 (276 aa).

7 consecutive transmembrane segments (helical) span residues 4–24 (ILIC…FLPV), 45–62 (KTFD…VCWE), 83–103 (FTLN…LFEK), 108–128 (VLFS…IILW), 187–207 (VATE…TLYE), 217–237 (VDSL…AFVC), and 252–272 (VFAW…YSGW).

This sequence belongs to the UppP family.

It is found in the cell inner membrane. The enzyme catalyses di-trans,octa-cis-undecaprenyl diphosphate + H2O = di-trans,octa-cis-undecaprenyl phosphate + phosphate + H(+). Its function is as follows. Catalyzes the dephosphorylation of undecaprenyl diphosphate (UPP). Confers resistance to bacitracin. The polypeptide is Undecaprenyl-diphosphatase 1 (Burkholderia ambifaria (strain ATCC BAA-244 / DSM 16087 / CCUG 44356 / LMG 19182 / AMMD) (Burkholderia cepacia (strain AMMD))).